The chain runs to 470 residues: Glucose-1-phosphate adenylyltransferase (470 aa).

Alpha-D-glucose 1-phosphate-binding positions include Gly-164, Glu-181 to Lys-182, and Ser-199.

It belongs to the bacterial/plant glucose-1-phosphate adenylyltransferase family. Homotetramer.

The catalysed reaction is alpha-D-glucose 1-phosphate + ATP + H(+) = ADP-alpha-D-glucose + diphosphate. Its pathway is glycan biosynthesis; glycogen biosynthesis. Its function is as follows. Involved in the biosynthesis of ADP-glucose, a building block required for the elongation reactions to produce glycogen. Catalyzes the reaction between ATP and alpha-D-glucose 1-phosphate (G1P) to produce pyrophosphate and ADP-Glc. The protein is Glucose-1-phosphate adenylyltransferase of Pseudarthrobacter chlorophenolicus (strain ATCC 700700 / DSM 12829 / CIP 107037 / JCM 12360 / KCTC 9906 / NCIMB 13794 / A6) (Arthrobacter chlorophenolicus).